Consider the following 296-residue polypeptide: Nucleotide-binding protein SPT_1506 (296 aa).

13 to 20 provides a ligand contact to ATP; sequence GMSGAGKT. 63–66 provides a ligand contact to GTP; sequence DMRS.

The protein belongs to the RapZ-like family.

In terms of biological role, displays ATPase and GTPase activities. The chain is Nucleotide-binding protein SPT_1506 from Streptococcus pneumoniae (strain Taiwan19F-14).